The following is a 230-amino-acid chain: Orotate phosphoribosyltransferase (230 aa).

Residues Arg-107, Lys-108, Lys-111, His-113, and 133-141 (EDLTTAGGS) each bind 5-phospho-alpha-D-ribose 1-diphosphate. Residue Thr-137 participates in orotate binding.

It belongs to the purine/pyrimidine phosphoribosyltransferase family. PyrE subfamily. Homodimer. Mg(2+) serves as cofactor.

The catalysed reaction is orotidine 5'-phosphate + diphosphate = orotate + 5-phospho-alpha-D-ribose 1-diphosphate. It participates in pyrimidine metabolism; UMP biosynthesis via de novo pathway; UMP from orotate: step 1/2. Catalyzes the transfer of a ribosyl phosphate group from 5-phosphoribose 1-diphosphate to orotate, leading to the formation of orotidine monophosphate (OMP). This is Orotate phosphoribosyltransferase from Allorhizobium ampelinum (strain ATCC BAA-846 / DSM 112012 / S4) (Agrobacterium vitis (strain S4)).